The following is a 158-amino-acid chain: MEKVPITIRGFAALEQELKHRQQVERPRIIQAIAEARALGDLSENAEYHAAKEAQSLNEGRVLELESLISRAEVIDVAKLSGSKVKFGATVQLIDEDTEEEKTYQIVGEPEADVRSGRVSITSPVARALIGKGVGDTVEVSTPGGGKSYEIVGISFSG.

It belongs to the GreA/GreB family.

Necessary for efficient RNA polymerase transcription elongation past template-encoded arresting sites. The arresting sites in DNA have the property of trapping a certain fraction of elongating RNA polymerases that pass through, resulting in locked ternary complexes. Cleavage of the nascent transcript by cleavage factors such as GreA or GreB allows the resumption of elongation from the new 3'terminus. GreA releases sequences of 2 to 3 nucleotides. This chain is Transcription elongation factor GreA, found in Methylobacterium nodulans (strain LMG 21967 / CNCM I-2342 / ORS 2060).